The primary structure comprises 64 residues: Large ribosomal subunit protein bL35 (64 aa).

The segment covering 1 to 14 (MKQKTHKGAAKRIK) has biased composition (basic residues). The tract at residues 1 to 50 (MKQKTHKGAAKRIKISGSGKLRREQANRRHLLEGKPSKRTRRLKGTEDVA) is disordered. Residues 21 to 36 (LRREQANRRHLLEGKP) are compositionally biased toward basic and acidic residues.

The protein belongs to the bacterial ribosomal protein bL35 family.

The sequence is that of Large ribosomal subunit protein bL35 from Corynebacterium jeikeium (strain K411).